Consider the following 95-residue polypeptide: Co-chaperonin GroES (95 aa).

The protein belongs to the GroES chaperonin family. In terms of assembly, heptamer of 7 subunits arranged in a ring. Interacts with the chaperonin GroEL.

It localises to the cytoplasm. Its function is as follows. Together with the chaperonin GroEL, plays an essential role in assisting protein folding. The GroEL-GroES system forms a nano-cage that allows encapsulation of the non-native substrate proteins and provides a physical environment optimized to promote and accelerate protein folding. GroES binds to the apical surface of the GroEL ring, thereby capping the opening of the GroEL channel. The sequence is that of Co-chaperonin GroES from Xanthomonas axonopodis pv. citri (strain 306).